Reading from the N-terminus, the 385-residue chain is Probable protein phosphatase 2C 38 (385 aa).

A PPM-type phosphatase domain is found at 46–357 (VAGEFSMSVI…DDITVIVVFL (312 aa)). Phosphoserine is present on serine 77. Residues aspartate 88, glycine 89, aspartate 289, and aspartate 348 each coordinate Mn(2+).

This sequence belongs to the PP2C family. As to quaternary structure, interacts with BIK1. Mg(2+) is required as a cofactor. Mn(2+) serves as cofactor. Phosphorylation at Ser-77 induces dissociation of PP2C38 from BIK1.

It is found in the cell membrane. It carries out the reaction O-phospho-L-seryl-[protein] + H2O = L-seryl-[protein] + phosphate. The catalysed reaction is O-phospho-L-threonyl-[protein] + H2O = L-threonyl-[protein] + phosphate. In terms of biological role, may dephosphorylate and repress plasma membrane H(+)-ATPases (PM H(+)-ATPases, e.g. AHA1 and AHA2), thus influencing negatively plant growth and fitness. Involved in pathogen-associated molecular pattern (PAMP)-triggered immunity (PTI) signaling. Negatively regulates immune responses by controlling the phosphorylation and activation status of BIK1, a central rate-limiting kinase in PTI signaling. Impairs the phosphorylation of the NADPH oxidase RBOHD by BIK1. This is Probable protein phosphatase 2C 38 from Arabidopsis thaliana (Mouse-ear cress).